The primary structure comprises 397 residues: Proteinase-activated receptor 2 (397 aa).

An N-terminal signal peptide occupies residues 1–25 (MRSPSAAWLLGAAILLAASLSCSGT). The propeptide at 26–36 (IQGTNRSSKGR) is removed for receptor activation. N30 carries N-linked (GlcNAc...) asparagine glycosylation. Residues 37-71 (SLIGKVDGTSHVTGKGVTVETVFSVDEFSASVLTG) are Extracellular-facing. Residues 72-101 (KLTTVFLPIVYTIVFVVGLPSNGMALWVFL) traverse the membrane as a helical segment. Residues 102–108 (FRTKKKH) are Cytoplasmic-facing. Residues 109-137 (PAVIYMANLALADLLSVIWFPLKIAYHIH) traverse the membrane as a helical segment. Topologically, residues 138 to 149 (GNNWIYGEALCN) are extracellular. Residues C148 and C226 are joined by a disulfide bond. The helical transmembrane segment at 150 to 177 (VLIGFFYGNMYCSILFMTCLSVQRYWVI) threads the bilayer. At 178–183 (VNPMGH) the chain is on the cytoplasmic side. The helical transmembrane segment at 184–211 (SRKKANIAIGISLAIWLLILLVTIPLYV) threads the bilayer. At 212–235 (VKQTIFIPALNITTCHDVLPEQLL) the chain is on the extracellular side. N222 is a glycosylation site (N-linked (GlcNAc...) asparagine). A helical transmembrane segment spans residues 236 to 269 (VGDMFNYFLSLAIGVFLFPAFLTASAYVLMIRML). At 270 to 277 (RSSAMDEN) the chain is on the cytoplasmic side. The helical transmembrane segment at 278 to 317 (SEKKRKRAIKLIVTVLAMYLICFTPSNLLLVVHYFLIKSQ) threads the bilayer. Residues 318 to 323 (GQSHVY) lie on the Extracellular side of the membrane. The helical transmembrane segment at 324 to 347 (ALYIVALCLSTLNSCIDPFVYYFV) threads the bilayer. Residues 348 to 397 (SHDFRDHAKNALLCRSVRTVKQMQVSLTSKKHSRKSSSYSSSSTTVKTSY) are Cytoplasmic-facing. C361 carries the S-palmitoyl cysteine lipid modification. The tract at residues 373–397 (SLTSKKHSRKSSSYSSSSTTVKTSY) is disordered. Residues 383–397 (SSSYSSSSTTVKTSY) are compositionally biased toward low complexity.

It belongs to the G-protein coupled receptor 1 family. As to quaternary structure, interacts with TLR4, COPS5 and TMED2. Interacts with GNAQ, GNA11, GNA12, GNA13 and GNA14. A proteolytic cleavage generates a new N-terminus that functions as a tethered ligand. Activating serine proteases include trypsin, mast cell tryptase, coagulation factors VII and Xa, myeloblastin/PRTN3 and membrane-type serine protease 1/ST14. Subsequent cleavage by serine proteases, including neutrophil elastase and cathepsin G, leads to receptor deactivation. At least in part, implicated proteases are also shown to activate the receptor; the glycosylation status of the receptor is thought to contribute to the difference. In addition to conventional trypsin-like proteases activated by other proteases and glycosidases derived from bacteria, fungi and insects. Activated by serine protease allergens such as dust mite Der p3 and Der p9 and mold Pen c13. Activated by P.gingivalis arginine-specific (trypsin-like) cysteine proteinases called gingipains. Activated by S.griseus exogenous chitinase. Activated by A.alternata aspartate protease; the cleavage generates non-conventional processed forms. Proteolytically cleaved by coagulation factor Xa (F10); cleavage results in activation of F2RL1-dependent signaling. In terms of processing, N-glycosylated and sialylated. Post-translationally, multiple phosphorylated on serine and threonine residues in the cytoplasmic region upon receptor activation; required for receptor desensitization and recruitment of beta-arrestin. Monoubiquitinated by CBL at the plasma membrane and in early endosomes; not required for receptor endocytosis but for translocation to late endosomes or lysosomes. Deubiquitination involves STAMBP and USP8; required for lysosomal trafficking and receptor degradation. Widely expressed in tissues with especially high levels in pancreas, liver, kidney, small intestine, and colon. Moderate expression is detected in many organs, but none in brain or skeletal muscle. Expressed in endothelial cells.

It is found in the cell membrane. Its activity is regulated as follows. Activated upon interaction by mucunain, a cowhage (Mucuna pruriens) plant cysteine proteinase. Functionally, receptor for trypsin and trypsin-like enzymes coupled to G proteins. Its function is mediated through the activation of several signaling pathways including phospholipase C (PLC), intracellular calcium, mitogen-activated protein kinase (MAPK), I-kappaB kinase/NF-kappaB and Rho. Can also be transactivated by cleaved F2R/PAR1. Involved in modulation of inflammatory responses and regulation of innate and adaptive immunity, and acts as a sensor for proteolytic enzymes generated during infection. Generally is promoting inflammation. Can signal synergistically with TLR4 and probably TLR2 in inflammatory responses and modulates TLR3 signaling. Has a protective role in establishing the endothelial barrier; the activity involves coagulation factor X. Regulates endothelial cell barrier integrity during neutrophil extravasation, probably following proteolytic cleavage by PRTN3. Proposed to have a bronchoprotective role in airway epithelium, but also shown to compromise the airway epithelial barrier by interrupting E-cadherin adhesion. Involved in the regulation of vascular tone; activation results in hypotension presumably mediated by vasodilation. Associates with a subset of G proteins alpha subunits such as GNAQ, GNA11, GNA14, GNA12 and GNA13, but probably not with G(o)-alpha, G(i) subunit alpha-1 and G(i) subunit alpha-2. However, according to PubMed:21627585 can signal through G(i) subunit alpha. Believed to be a class B receptor which internalizes as a complex with arrestin and traffic with it to endosomal vesicles, presumably as desensitized receptor, for extended periods of time. Mediates inhibition of TNF-alpha stimulated JNK phosphorylation via coupling to GNAQ and GNA11; the function involves dissociation of RIPK1 and TRADD from TNFR1. Mediates phosphorylation of nuclear factor NF-kappa-B RELA subunit at 'Ser-536'; the function involves IKBKB and is predominantly independent of G proteins. Involved in cellular migration. Involved in cytoskeletal rearrangement and chemotaxis through beta-arrestin-promoted scaffolds; the function is independent of GNAQ and GNA11 and involves promotion of cofilin dephosphorylation and actin filament severing. Induces redistribution of COPS5 from the plasma membrane to the cytosol and activation of the JNK cascade is mediated by COPS5. Involved in the recruitment of leukocytes to the sites of inflammation and is the major PAR receptor capable of modulating eosinophil function such as pro-inflammatory cytokine secretion, superoxide production and degranulation. During inflammation promotes dendritic cell maturation, trafficking to the lymph nodes and subsequent T-cell activation. Involved in antimicrobial response of innate immune cells; activation enhances phagocytosis of Gram-positive and killing of Gram-negative bacteria. Acts synergistically with interferon-gamma in enhancing antiviral responses. Implicated in a number of acute and chronic inflammatory diseases such as of the joints, lungs, brain, gastrointestinal tract, periodontium, skin, and vascular systems, and in autoimmune disorders. Probably mediates activation of pro-inflammatory and pro-fibrotic responses in fibroblasts, triggered by coagulation factor Xa (F10). Mediates activation of barrier protective signaling responses in endothelial cells, triggered by coagulation factor Xa (F10). This Homo sapiens (Human) protein is Proteinase-activated receptor 2 (F2RL1).